A 67-amino-acid chain; its full sequence is Large ribosomal subunit protein eL38 (67 aa).

The protein belongs to the eukaryotic ribosomal protein eL38 family.

In Aeropyrum pernix (strain ATCC 700893 / DSM 11879 / JCM 9820 / NBRC 100138 / K1), this protein is Large ribosomal subunit protein eL38 (rpl38e).